Consider the following 753-residue polypeptide: Polyribonucleotide nucleotidyltransferase (753 aa).

Residues aspartate 543 and aspartate 549 each contribute to the Mg(2+) site. The KH domain maps to 609–668 (PRITTVKIPVAKIGELIGPKGKNINALTEETGANISIEDDGTVFISAADGASAEAAIEKI). An S1 motif domain is found at 680 to 749 (GERFLGTVVK…NRGKISLVPV (70 aa)).

The protein belongs to the polyribonucleotide nucleotidyltransferase family. It depends on Mg(2+) as a cofactor.

It localises to the cytoplasm. The enzyme catalyses RNA(n+1) + phosphate = RNA(n) + a ribonucleoside 5'-diphosphate. Functionally, involved in mRNA degradation. Catalyzes the phosphorolysis of single-stranded polyribonucleotides processively in the 3'- to 5'-direction. This Corynebacterium glutamicum (strain ATCC 13032 / DSM 20300 / JCM 1318 / BCRC 11384 / CCUG 27702 / LMG 3730 / NBRC 12168 / NCIMB 10025 / NRRL B-2784 / 534) protein is Polyribonucleotide nucleotidyltransferase.